We begin with the raw amino-acid sequence, 141 residues long: Putative pre-16S rRNA nuclease (141 aa).

It belongs to the YqgF nuclease family.

The protein resides in the cytoplasm. Could be a nuclease involved in processing of the 5'-end of pre-16S rRNA. This chain is Putative pre-16S rRNA nuclease, found in Syntrophomonas wolfei subsp. wolfei (strain DSM 2245B / Goettingen).